A 129-amino-acid polypeptide reads, in one-letter code: Phosphoribosyl-AMP cyclohydrolase (129 aa).

Asp84 is a Mg(2+) binding site. Cys85 contributes to the Zn(2+) binding site. Mg(2+) is bound by residues Asp86 and Asp88. Zn(2+) is bound by residues Cys101 and Cys108.

The protein belongs to the PRA-CH family. Homodimer. Mg(2+) is required as a cofactor. The cofactor is Zn(2+).

The protein resides in the cytoplasm. The catalysed reaction is 1-(5-phospho-beta-D-ribosyl)-5'-AMP + H2O = 1-(5-phospho-beta-D-ribosyl)-5-[(5-phospho-beta-D-ribosylamino)methylideneamino]imidazole-4-carboxamide. It participates in amino-acid biosynthesis; L-histidine biosynthesis; L-histidine from 5-phospho-alpha-D-ribose 1-diphosphate: step 3/9. Functionally, catalyzes the hydrolysis of the adenine ring of phosphoribosyl-AMP. The chain is Phosphoribosyl-AMP cyclohydrolase from Halobacterium salinarum (strain ATCC 700922 / JCM 11081 / NRC-1) (Halobacterium halobium).